A 359-amino-acid chain; its full sequence is Glycerol-3-phosphate dehydrogenase [NAD(P)+] (359 aa).

NADPH contacts are provided by Thr-11, Trp-12, Arg-32, and Lys-107. Sn-glycerol 3-phosphate-binding residues include Lys-107 and Gly-138. Position 142 (Ala-142) interacts with NADPH. Sn-glycerol 3-phosphate-binding residues include Lys-193, Asp-246, Ser-256, Arg-257, and Asn-258. The active-site Proton acceptor is Lys-193. Arg-257 contributes to the NADPH binding site. Residues Val-281 and Glu-283 each contribute to the NADPH site.

This sequence belongs to the NAD-dependent glycerol-3-phosphate dehydrogenase family.

It localises to the cytoplasm. The catalysed reaction is sn-glycerol 3-phosphate + NAD(+) = dihydroxyacetone phosphate + NADH + H(+). It catalyses the reaction sn-glycerol 3-phosphate + NADP(+) = dihydroxyacetone phosphate + NADPH + H(+). The protein operates within membrane lipid metabolism; glycerophospholipid metabolism. Catalyzes the reduction of the glycolytic intermediate dihydroxyacetone phosphate (DHAP) to sn-glycerol 3-phosphate (G3P), the key precursor for phospholipid synthesis. This is Glycerol-3-phosphate dehydrogenase [NAD(P)+] from Dehalococcoides mccartyi (strain ATCC BAA-2100 / JCM 16839 / KCTC 5957 / BAV1).